The chain runs to 100 residues: Urease subunit gamma (100 aa).

It belongs to the urease gamma subunit family. In terms of assembly, heterotrimer of UreA (gamma), UreB (beta) and UreC (alpha) subunits. Three heterotrimers associate to form the active enzyme.

The protein resides in the cytoplasm. The catalysed reaction is urea + 2 H2O + H(+) = hydrogencarbonate + 2 NH4(+). It functions in the pathway nitrogen metabolism; urea degradation; CO(2) and NH(3) from urea (urease route): step 1/1. The protein is Urease subunit gamma of Cupriavidus necator (strain ATCC 17699 / DSM 428 / KCTC 22496 / NCIMB 10442 / H16 / Stanier 337) (Ralstonia eutropha).